Here is a 310-residue protein sequence, read N- to C-terminus: Methionyl-tRNA formyltransferase (310 aa).

Position 110-113 (110-113 (SLLP)) interacts with (6S)-5,6,7,8-tetrahydrofolate.

Belongs to the Fmt family.

It carries out the reaction L-methionyl-tRNA(fMet) + (6R)-10-formyltetrahydrofolate = N-formyl-L-methionyl-tRNA(fMet) + (6S)-5,6,7,8-tetrahydrofolate + H(+). Its function is as follows. Attaches a formyl group to the free amino group of methionyl-tRNA(fMet). The formyl group appears to play a dual role in the initiator identity of N-formylmethionyl-tRNA by promoting its recognition by IF2 and preventing the misappropriation of this tRNA by the elongation apparatus. This Clostridium tetani (strain Massachusetts / E88) protein is Methionyl-tRNA formyltransferase.